A 357-amino-acid polypeptide reads, in one-letter code: Phosphoribosylformylglycinamidine cyclo-ligase (357 aa).

It belongs to the AIR synthase family.

The protein resides in the cytoplasm. It catalyses the reaction 2-formamido-N(1)-(5-O-phospho-beta-D-ribosyl)acetamidine + ATP = 5-amino-1-(5-phospho-beta-D-ribosyl)imidazole + ADP + phosphate + H(+). It participates in purine metabolism; IMP biosynthesis via de novo pathway; 5-amino-1-(5-phospho-D-ribosyl)imidazole from N(2)-formyl-N(1)-(5-phospho-D-ribosyl)glycinamide: step 2/2. This Rhizobium etli (strain CIAT 652) protein is Phosphoribosylformylglycinamidine cyclo-ligase.